The following is a 745-amino-acid chain: Inhibitor of nuclear factor kappa-B kinase subunit alpha (745 aa).

One can recognise a Protein kinase domain in the interval 15-302; it reads WEMRERLGTG…LTLKQPRCFV (288 aa). ATP contacts are provided by residues 21-29 and Lys44; that span reads LGTGGFGNV. Thr23 is modified (phosphothreonine; by PKB/AKT1 and SGK1). Asp144 (proton acceptor) is an active-site residue. Residue Ser176 is modified to Phosphoserine; by MAP3K14. At Thr179 the chain carries (Microbial infection) O-acetylthreonine; by Yersinia YopJ. Ser180 is modified (phosphoserine; by SGK1). The interval 455-476 is leucine-zipper; it reads LLRYNANLTKMKNTLISASQQL. The segment at 738–743 is NEMO-binding; it reads LDWSWL.

Belongs to the protein kinase superfamily. Ser/Thr protein kinase family. I-kappa-B kinase subfamily. As to quaternary structure, component of the I-kappa-B-kinase (IKK) core complex consisting of CHUK, IKBKB and IKBKG; probably four alpha/CHUK-beta/IKBKB dimers are associated with four gamma/IKBKG subunits. The IKK core complex seems to associate with regulatory or adapter proteins to form a IKK-signalosome holo-complex. The IKK complex associates with TERF2IP/RAP1, leading to promote IKK-mediated phosphorylation of RELA/p65. Part of a complex composed of NCOA2, NCOA3, CHUK/IKKA, IKBKB, IKBKG and CREBBP. Part of a 70-90 kDa complex at least consisting of CHUK/IKKA, IKBKB, NFKBIA, RELA, ELP1 and MAP3K14. Directly interacts with TRPC4AP. May interact with TRAF2. Interacts with NALP2. May interact with MAVS/IPS1. Interacts with ARRB1 and ARRB2. Interacts with NLRC5; prevents CHUK phosphorylation and kinase activity. Interacts with PIAS1; this interaction induces PIAS1 phosphorylation. Interacts with ZNF268 isoform 2; the interaction is further increased in a TNF-alpha-dependent manner. Interacts with FOXO3. Interacts with IFIT5; the interaction synergizes the recruitment of IKK to MAP3K7 and enhances IKK phosphorylation. Interacts with LRRC14. Interacts with SASH1. Directly interacts with DDX3X after the physiological activation of the TLR7 and TLR8 pathways; this interaction enhances CHUK autophosphorylation. (Microbial infection) Interacts with InlC of Listeria monocytogenes. Post-translationally, phosphorylated by MAP3K14/NIK, AKT and to a lesser extent by MEKK1, and dephosphorylated by PP2A. Autophosphorylated. Ubiquitinated by TRIM56 via 'Lys-63'-linked ubiquitination, promoting activation of CHUK/IKKA. In terms of processing, (Microbial infection) Acetylation of Thr-179 by Yersinia YopJ prevents phosphorylation and activation, thus blocking the I-kappa-B signaling pathway. As to expression, widely expressed.

Its subcellular location is the cytoplasm. It localises to the nucleus. It carries out the reaction L-seryl-[I-kappa-B protein] + ATP = O-phospho-L-seryl-[I-kappa-B protein] + ADP + H(+). Its activity is regulated as follows. Activated when phosphorylated and inactivated when dephosphorylated. Functionally, serine kinase that plays an essential role in the NF-kappa-B signaling pathway which is activated by multiple stimuli such as inflammatory cytokines, bacterial or viral products, DNA damages or other cellular stresses. Acts as a part of the canonical IKK complex in the conventional pathway of NF-kappa-B activation and phosphorylates inhibitors of NF-kappa-B on serine residues. These modifications allow polyubiquitination of the inhibitors and subsequent degradation by the proteasome. In turn, free NF-kappa-B is translocated into the nucleus and activates the transcription of hundreds of genes involved in immune response, growth control, or protection against apoptosis. Negatively regulates the pathway by phosphorylating the scaffold protein TAXBP1 and thus promoting the assembly of the A20/TNFAIP3 ubiquitin-editing complex (composed of A20/TNFAIP3, TAX1BP1, and the E3 ligases ITCH and RNF11). Therefore, CHUK plays a key role in the negative feedback of NF-kappa-B canonical signaling to limit inflammatory gene activation. As part of the non-canonical pathway of NF-kappa-B activation, the MAP3K14-activated CHUK/IKKA homodimer phosphorylates NFKB2/p100 associated with RelB, inducing its proteolytic processing to NFKB2/p52 and the formation of NF-kappa-B RelB-p52 complexes. In turn, these complexes regulate genes encoding molecules involved in B-cell survival and lymphoid organogenesis. Also participates in the negative feedback of the non-canonical NF-kappa-B signaling pathway by phosphorylating and destabilizing MAP3K14/NIK. Within the nucleus, phosphorylates CREBBP and consequently increases both its transcriptional and histone acetyltransferase activities. Modulates chromatin accessibility at NF-kappa-B-responsive promoters by phosphorylating histones H3 at 'Ser-10' that are subsequently acetylated at 'Lys-14' by CREBBP. Additionally, phosphorylates the CREBBP-interacting protein NCOA3. Also phosphorylates FOXO3 and may regulate this pro-apoptotic transcription factor. Phosphorylates RIPK1 at 'Ser-25' which represses its kinase activity and consequently prevents TNF-mediated RIPK1-dependent cell death. Phosphorylates AMBRA1 following mitophagy induction, promoting AMBRA1 interaction with ATG8 family proteins and its mitophagic activity. This chain is Inhibitor of nuclear factor kappa-B kinase subunit alpha (CHUK), found in Homo sapiens (Human).